The chain runs to 471 residues: Tryptophanase (471 aa).

The residue at position 270 (Lys270) is an N6-(pyridoxal phosphate)lysine.

It belongs to the beta-eliminating lyase family. Homotetramer. Requires pyridoxal 5'-phosphate as cofactor.

It carries out the reaction L-tryptophan + H2O = indole + pyruvate + NH4(+). It functions in the pathway amino-acid degradation; L-tryptophan degradation via pyruvate pathway; indole and pyruvate from L-tryptophan: step 1/1. The polypeptide is Tryptophanase (Histophilus somni (strain 129Pt) (Haemophilus somnus)).